The chain runs to 555 residues: Formate--tetrahydrofolate ligase (555 aa).

The protein belongs to the formate--tetrahydrofolate ligase family.

It carries out the reaction (6S)-5,6,7,8-tetrahydrofolate + formate + ATP = (6R)-10-formyltetrahydrofolate + ADP + phosphate. It participates in one-carbon metabolism; tetrahydrofolate interconversion. This chain is Formate--tetrahydrofolate ligase, found in Porphyromonas gingivalis (strain ATCC BAA-308 / W83).